We begin with the raw amino-acid sequence, 126 residues long: Large ribosomal subunit protein bL17 (126 aa).

Belongs to the bacterial ribosomal protein bL17 family. As to quaternary structure, part of the 50S ribosomal subunit. Contacts protein L32.

The chain is Large ribosomal subunit protein bL17 from Magnetococcus marinus (strain ATCC BAA-1437 / JCM 17883 / MC-1).